Reading from the N-terminus, the 546-residue chain is Adenine DNA glycosylase (546 aa).

The tract at residues 19-51 is disordered; the sequence is RAAVGSGHRKQAASQEGRQKHAKNNSQAKPSAC. E131 functions as the Proton donor/acceptor in the catalytic mechanism. 4 residues coordinate [4Fe-4S] cluster: C287, C294, C297, and C303. The region spanning 364 to 495 is the Nudix hydrolase domain; sequence PREESSATCV…AMKKVFRVYQ (132 aa). The short motif at 404–426 is the Nudix box element; that stretch reads VTWEPSEQLQRKALLQELQRWAG.

It belongs to the Nth/MutY family. Requires [4Fe-4S] cluster as cofactor.

It localises to the nucleus. The protein resides in the mitochondrion. It catalyses the reaction Hydrolyzes free adenine bases from 7,8-dihydro-8-oxoguanine:adenine mismatched double-stranded DNA, leaving an apurinic site.. Functionally, involved in oxidative DNA damage repair. Initiates repair of A*oxoG to C*G by removing the inappropriately paired adenine base from the DNA backbone. Possesses both adenine and 2-OH-A DNA glycosylase activities. In Homo sapiens (Human), this protein is Adenine DNA glycosylase (MUTYH).